Here is a 238-residue protein sequence, read N- to C-terminus: Large ribosomal subunit protein uL5c (238 aa).

It belongs to the universal ribosomal protein uL5 family. In terms of assembly, part of the 50S ribosomal subunit; contacts the 5S rRNA.

The protein localises to the plastid. The protein resides in the chloroplast. Binds 5S rRNA, forms part of the central protuberance of the 50S subunit. The chain is Large ribosomal subunit protein uL5c (rpl5) from Thalassiosira pseudonana (Marine diatom).